Consider the following 463-residue polypeptide: Glutamyl-tRNA(Gln) amidotransferase subunit A, mitochondrial (463 aa).

Active-site charge relay system residues include lysine 47 and serine 124. Serine 148 serves as the catalytic Acyl-ester intermediate.

This sequence belongs to the amidase family. GatA subfamily. Subunit of the heterotrimeric GatFAB amidotransferase (AdT) complex, composed of A, B and F subunits.

Its subcellular location is the mitochondrion. The enzyme catalyses L-glutamyl-tRNA(Gln) + L-glutamine + ATP + H2O = L-glutaminyl-tRNA(Gln) + L-glutamate + ADP + phosphate + H(+). Functionally, allows the formation of correctly charged Gln-tRNA(Gln) through the transamidation of misacylated Glu-tRNA(Gln) in the mitochondria. The reaction takes place in the presence of glutamine and ATP through an activated gamma-phospho-Glu-tRNA(Gln). The protein is Glutamyl-tRNA(Gln) amidotransferase subunit A, mitochondrial of Eremothecium gossypii (strain ATCC 10895 / CBS 109.51 / FGSC 9923 / NRRL Y-1056) (Yeast).